Consider the following 189-residue polypeptide: UPF0312 protein VPA0850 (189 aa).

The first 22 residues, 1–22 (MKKSLFATGLAIAMALPLGAQA), serve as a signal peptide directing secretion.

This sequence belongs to the UPF0312 family. Type 1 subfamily.

It is found in the periplasm. This chain is UPF0312 protein VPA0850, found in Vibrio parahaemolyticus serotype O3:K6 (strain RIMD 2210633).